We begin with the raw amino-acid sequence, 369 residues long: Glutamate 5-kinase (369 aa).

Residue K8 participates in ATP binding. Residues S49, D136, and N148 each coordinate substrate. ATP contacts are provided by residues 168–169 (TD) and 211–217 (TGGMATK). Residues 276–354 (TGKLYLDSGA…DEISQILGYG (79 aa)) form the PUA domain.

This sequence belongs to the glutamate 5-kinase family.

It is found in the cytoplasm. The catalysed reaction is L-glutamate + ATP = L-glutamyl 5-phosphate + ADP. The protein operates within amino-acid biosynthesis; L-proline biosynthesis; L-glutamate 5-semialdehyde from L-glutamate: step 1/2. Its function is as follows. Catalyzes the transfer of a phosphate group to glutamate to form L-glutamate 5-phosphate. This Rippkaea orientalis (strain PCC 8801 / RF-1) (Cyanothece sp. (strain PCC 8801)) protein is Glutamate 5-kinase.